The primary structure comprises 568 residues: Zinc finger protein 583 (568 aa).

In terms of domain architecture, KRAB spans leucine 6–proline 77. 12 C2H2-type zinc fingers span residues leucine 211–histidine 233, tyrosine 239–histidine 261, tyrosine 267–histidine 289, tyrosine 295–histidine 317, phenylalanine 323–histidine 345, tyrosine 351–histidine 373, tyrosine 379–histidine 401, tyrosine 407–histidine 429, tyrosine 435–histidine 457, tyrosine 463–histidine 485, tyrosine 491–histidine 513, and tyrosine 519–histidine 541.

It belongs to the krueppel C2H2-type zinc-finger protein family.

It localises to the nucleus. Its function is as follows. May be involved in transcriptional regulation. This Mus musculus (Mouse) protein is Zinc finger protein 583 (Znf583).